The sequence spans 695 residues: Lysophospholipase 2 (695 aa).

Residues 1 to 19 form the signal peptide; the sequence is MQLSVLIASVLAAGAAVDA. Residues N26, N72, N83, N115, N152, N171, N207, N269, N335, N379, N480, N504, N513, N532, N556, N573, N620, N626, N644, and N648 are each glycosylated (N-linked (GlcNAc...) asparagine). One can recognise a PLA2c domain in the interval 28 to 577; it reads SCPDNANFIR…TNYCWNGTID (550 aa). Residues 612-662 form a disordered region; it reads NTGSGTKSNSSSKTNSTLVTSSRATSTGTLISNSSSNSTVSSTAARSSTSS.

This sequence belongs to the lysophospholipase family.

It is found in the secreted. Its subcellular location is the cell wall. It catalyses the reaction a 1-acyl-sn-glycero-3-phosphocholine + H2O = sn-glycerol 3-phosphocholine + a fatty acid + H(+). Functionally, catalyzes the release of fatty acids from lysophospholipids. Phospholipase B may well contribute to pathogenicity by abetting the fungus in damaging and traversing host cell membranes, processes which likely increase the rapidity of disseminated infection. In Candida glabrata (strain ATCC 2001 / BCRC 20586 / JCM 3761 / NBRC 0622 / NRRL Y-65 / CBS 138) (Yeast), this protein is Lysophospholipase 2.